Reading from the N-terminus, the 972-residue chain is Aminopeptidase N (972 aa).

At Thr2–Arg17 the chain is on the cytoplasmic side. Residues Leu18 to Phe39 traverse the membrane as a helical; Signal-anchor for type II membrane protein segment. The Extracellular segment spans residues Thr40–Leu972. Positions Ser47–Asn62 are enriched in basic and acidic residues. Residues Ser47–Ala66 form a disordered region. Residue Asn99 is glycosylated (N-linked (GlcNAc...) asparagine). Glu208 provides a ligand contact to substrate. N-linked (GlcNAc...) asparagine glycosylation is present at Asn227. Gly343 to Asn347 provides a ligand contact to substrate. Zn(2+) is bound at residue His379. The active-site Proton acceptor is the Glu380. Zn(2+)-binding residues include His383 and Glu402. Residue Asn549 is glycosylated (N-linked (GlcNAc...) asparagine). 2 cysteine pairs are disulfide-bonded: Cys759/Cys766 and Cys804/Cys840. N-linked (GlcNAc...) asparagine glycosylation occurs at Asn858.

The protein belongs to the peptidase M1 family. The cofactor is Zn(2+).

The protein localises to the membrane. It catalyses the reaction Release of an N-terminal amino acid, Xaa-|-Yaa- from a peptide, amide or arylamide. Xaa is preferably Ala, but may be most amino acids including Pro (slow action). When a terminal hydrophobic residue is followed by a prolyl residue, the two may be released as an intact Xaa-Pro dipeptide.. In Haemonchus contortus (Barber pole worm), this protein is Aminopeptidase N.